A 200-amino-acid polypeptide reads, in one-letter code: Phospholipase A2 inhibitor CNF (200 aa).

The first 19 residues, 1–19 (MKYLHTICLLFIFVARGNS), serve as a signal peptide directing secretion. Disulfide bonds link C22–C46, C25–C32, C39–C67, C73–C94, C95–C100, C118–C143, C136–C165, and C169–C191. An N-linked (GlcNAc...) asparagine; partial glycan is attached at N176.

Occurs as a mixture of oligomers. Tetrameric arrangement appears to be the predominant quaternary structure. Interacts with phospholipase A2 crotoxin basic subunit CBd; the interaction leads to dissociation of the CA-CB heterodimer and to inhibition of PLA2 activity of the CB subunit. The carbohydrate moiety increases the inhibition capacity of CNF, but is not essential for activity and for oligomerization. Expressed by the liver.

The protein resides in the secreted. In terms of biological role, inhibits the PLA2 activity of crotoxin (CTX) by replacing the acid subunit (CA) in the CTX complex. Displays a pro-inflammatory action through activation of important main signaling pathways for human leukocytes, in vitro. Abolishes both the muscle-paralyzing and muscle-damaging activities of CTX in mice phrenic nerve-diaphragm muscle preparations. The sequence is that of Phospholipase A2 inhibitor CNF from Crotalus durissus terrificus (South American rattlesnake).